A 215-amino-acid polypeptide reads, in one-letter code: Cytochrome b6 (215 aa).

Residues 1–31 (MANVYDWFQERLEIQALADDVTSKYVPPHVN) are Cytoplasmic-facing. The helical transmembrane segment at 32–52 (IFYCLGGITLTCFLIQFATGF) threads the bilayer. C35 provides a ligand contact to heme c. Residues 53–89 (AMTFYYKPTVTEAYASVQYIMNEVSFGWLIRSIHRWS) lie on the Lumenal, thylakoid side of the membrane. Residues R83, H86, H100, and R103 each coordinate heme b. Residues 90–110 (ASMMVLMMILHVFRVYLTGGF) traverse the membrane as a helical segment. Residues 111-115 (KKPRE) lie on the Cytoplasmic side of the membrane. Residues 116-136 (LTWISGVILAVITVSFGVTGY) form a helical membrane-spanning segment. Over 137-185 (SLPWDQVGYWAVKIVSGVPEAIPVVGVLISDLLRGGSSVGQATLTRYYS) the chain is Lumenal, thylakoid. The chain crosses the membrane as a helical span at residues 186–206 (AHTFVLPWLIAVFMLLHFLMI). Residues H187 and H202 each coordinate heme b. Residues 207–215 (RKQGISGPL) are Cytoplasmic-facing. K208 provides a ligand contact to heme c.

The protein belongs to the cytochrome b family. PetB subfamily. The 4 large subunits of the cytochrome b6-f complex are cytochrome b6, subunit IV (17 kDa polypeptide, PetD), cytochrome f and the Rieske protein, while the 4 small subunits are PetG, PetL, PetM and PetN. The complex functions as a dimer. Requires heme b as cofactor. Heme c is required as a cofactor.

Its subcellular location is the cellular thylakoid membrane. Its function is as follows. Component of the cytochrome b6-f complex, which mediates electron transfer between photosystem II (PSII) and photosystem I (PSI), cyclic electron flow around PSI, and state transitions. The polypeptide is Cytochrome b6 (Mastigocladus laminosus (Fischerella sp.)).